The following is a 106-amino-acid chain: MSKAQRMRIKLKSFDYKLLEQSAKKIVETAKNTGAEVSGPVPLPTDREVITIIRAPHKYKDSREQFEIKTHKRLIDIIKPTQKTVDALMRVELPAGVDIEIKLKEV.

It belongs to the universal ribosomal protein uS10 family. As to quaternary structure, part of the 30S ribosomal subunit.

In terms of biological role, involved in the binding of tRNA to the ribosomes. The polypeptide is Small ribosomal subunit protein uS10 (Caldicellulosiruptor bescii (strain ATCC BAA-1888 / DSM 6725 / KCTC 15123 / Z-1320) (Anaerocellum thermophilum)).